The sequence spans 450 residues: Protein indeterminate-domain 13 (450 aa).

Residue Ser-54 is modified to Phosphoserine. 2 consecutive C2H2-type zinc fingers follow at residues 64-86 and 106-136; these read FFCEICNKGFQREQNLQLHKRGH and YICPEKSCVHHDPARALGDLTGIKKHFSRKH. The short motif at 128–135 is the Nuclear localization signal element; it reads IKKHFSRK. Residues 141–165 form a C2H2-type 2; degenerate zinc finger; sequence WKCDKCSKKYAVISDWKAHNKICGS. The Zn(2+) site is built by Cys-143, Cys-146, His-159, Cys-163, Cys-170, Cys-172, His-185, and Cys-189. The CCHC-type 2; atypical zinc finger occupies 168–191; that stretch reads FRCDCGTLFSRKDSFISHRSFCDV. The interval 178-190 is SHR-binding; sequence RKDSFISHRSFCD. Residues 248 to 263 show a composition bias toward polar residues; it reads FGQKFTNSNPTQQQPN. The interval 248-280 is disordered; the sequence is FGQKFTNSNPTQQQPNALALSSPPSPRSTSDSV.

It is found in the nucleus. Functionally, probable transcription factor. In Arabidopsis thaliana (Mouse-ear cress), this protein is Protein indeterminate-domain 13.